We begin with the raw amino-acid sequence, 455 residues long: MNSRLQEIRERQKLRRQLLAQQLGAESPDSIGAVLNSKDEQKEIEETRETCRASFDISVPGAKRKCLNEGEDPEEDVEEQKEDVEPQHQEESGPYEEVYKDSSTFLKGTQSLNPHNDYCQHFVDTGHRPQNFIRDGGLADRFEEYPKQRELIRLKDELISATNTPPMYLQADPDTFDLRELKCKFDVILIEPPLEEYYRESGIIANERFWNWDDIMKLNIEEISSIRSFVFLWCGSGEGLDLGRMCLRKWGFRRCEDICWIKTNKNNPGKTKTLDPKAVFQRTKEHCLMGIKGTVRRSTDGDFIHANVDIDLIITEEPEMGNIEKPVEIFHIIEHFCLGRRRLHLFGRDSTIRPGWLTVGPTLTNSNFNIEVYSTHFSEPNSYLSGCTEEIERLRPKSPPPKSMAERGGGAPRGGRGGPAAGRGDRGRERNRPNFRGDRGGFRGRGGPHRGFPPR.

Residues 21–96 are disordered; the sequence is QQLGAESPDS…QHQEESGPYE (76 aa). A compositionally biased stretch (basic and acidic residues) spans 37–51; sequence SKDEQKEIEETRETC. The segment covering 69 to 82 has biased composition (acidic residues); that stretch reads EGEDPEEDVEEQKE. Interaction with METTL3 regions lie at residues 134-135 and 236-237; these read RD and SG. Positions 244–253 are positively charged region required for RNA-binding; sequence RMCLRKWGFR. 2 interaction with METTL3 regions span residues 254–257 and 277–286; these read RCED and KAVFQRTKEH. The segment at 296 to 297 is positively charged region required for RNA-binding; sequence RR. The segment at 307-311 is interaction with METTL3; it reads NVDID. Residues 392-455 are disordered; that stretch reads ERLRPKSPPP…GGPHRGFPPR (64 aa). Positions 407 to 421 are enriched in gly residues; the sequence is RGGGAPRGGRGGPAA. Over residues 423-441 the composition is skewed to basic and acidic residues; the sequence is RGDRGRERNRPNFRGDRGG.

The protein belongs to the MT-A70-like family. Heterodimer; heterodimerizes with mettl3 to form an antiparallel heterodimer that constitutes an active methyltransferase. Component of the WMM complex, a N6-methyltransferase complex composed of a catalytic subcomplex, named MAC, and of an associated subcomplex, named MACOM. The MAC subcomplex is composed of mettl3 and mettl14.

It localises to the nucleus. In terms of biological role, the METTL3-METTL14 heterodimer forms a N6-methyltransferase complex that methylates adenosine residues at the N(6) position of some mRNAs and regulates the circadian clock, differentiation of embryonic stem cells and cortical neurogenesis. In the heterodimer formed with mettl3, mettl14 constitutes the RNA-binding scaffold that recognizes the substrate rather than the catalytic core. N6-methyladenosine (m6A), which takes place at the 5'-[AG]GAC-3' consensus sites of some mRNAs, plays a role in mRNA stability and processing. This chain is N(6)-adenosine-methyltransferase non-catalytic subunit METTL14 (mettl14), found in Danio rerio (Zebrafish).